The chain runs to 501 residues: Ribose import ATP-binding protein RbsA (501 aa).

ABC transporter domains follow at residues 8–245 (LKMV…VGRT) and 255–500 (VKKG…VGIN). 40–47 (GENGAGKS) provides a ligand contact to ATP.

It belongs to the ABC transporter superfamily. Ribose importer (TC 3.A.1.2.1) family. As to quaternary structure, the complex is composed of an ATP-binding protein (RbsA), two transmembrane proteins (RbsC) and a solute-binding protein (RbsB).

It localises to the cell membrane. It carries out the reaction D-ribose(out) + ATP + H2O = D-ribose(in) + ADP + phosphate + H(+). In terms of biological role, part of the ABC transporter complex RbsABC involved in ribose import. Responsible for energy coupling to the transport system. In Clostridium perfringens (strain 13 / Type A), this protein is Ribose import ATP-binding protein RbsA.